Reading from the N-terminus, the 121-residue chain is Large ribosomal subunit protein P2 (121 aa).

Residues 72 to 99 (VAVPSGGAPAAATAAAEAPKGGDKAAAP) show a composition bias toward low complexity. The segment at 72–121 (VAVPSGGAPAAATAAAEAPKGGDKAAAPPKEEKKEESEESDADMGFSPFD) is disordered.

The protein belongs to the eukaryotic ribosomal protein P1/P2 family. P1 and P2 exist as dimers at the large ribosomal subunit. In terms of processing, phosphorylated.

Plays an important role in the elongation step of protein synthesis. In Taenia solium (Pork tapeworm), this protein is Large ribosomal subunit protein P2.